A 145-amino-acid chain; its full sequence is D-aminoacyl-tRNA deacylase (145 aa).

Positions 137 to 138 match the Gly-cisPro motif, important for rejection of L-amino acids motif; that stretch reads GP.

Belongs to the DTD family. As to quaternary structure, homodimer.

It is found in the cytoplasm. It carries out the reaction glycyl-tRNA(Ala) + H2O = tRNA(Ala) + glycine + H(+). The enzyme catalyses a D-aminoacyl-tRNA + H2O = a tRNA + a D-alpha-amino acid + H(+). Functionally, an aminoacyl-tRNA editing enzyme that deacylates mischarged D-aminoacyl-tRNAs. Also deacylates mischarged glycyl-tRNA(Ala), protecting cells against glycine mischarging by AlaRS. Acts via tRNA-based rather than protein-based catalysis; rejects L-amino acids rather than detecting D-amino acids in the active site. By recycling D-aminoacyl-tRNA to D-amino acids and free tRNA molecules, this enzyme counteracts the toxicity associated with the formation of D-aminoacyl-tRNA entities in vivo and helps enforce protein L-homochirality. The protein is D-aminoacyl-tRNA deacylase of Brevibacillus brevis (strain 47 / JCM 6285 / NBRC 100599).